Here is a 184-residue protein sequence, read N- to C-terminus: MPSETIGVIADRYATALFELADSSGSLDQVAGDLKTLQAMLRESADLRRVVDSPVLSRNDQGKAISAVAKAAGFSELTNKFLGLAAQNRRLHTLSGVIASYLGRLAARRGEKSATVASAVALSPAQQDALTTALKAAFGGNVAVDVKVDPSLLGGLVVQVGSRMVDSSLKTKLQHLKLAMKGVG.

The protein belongs to the ATPase delta chain family. F-type ATPases have 2 components, F(1) - the catalytic core - and F(0) - the membrane proton channel. F(1) has five subunits: alpha(3), beta(3), gamma(1), delta(1), epsilon(1). F(0) has three main subunits: a(1), b(2) and c(10-14). The alpha and beta chains form an alternating ring which encloses part of the gamma chain. F(1) is attached to F(0) by a central stalk formed by the gamma and epsilon chains, while a peripheral stalk is formed by the delta and b chains.

The protein localises to the cell inner membrane. F(1)F(0) ATP synthase produces ATP from ADP in the presence of a proton or sodium gradient. F-type ATPases consist of two structural domains, F(1) containing the extramembraneous catalytic core and F(0) containing the membrane proton channel, linked together by a central stalk and a peripheral stalk. During catalysis, ATP synthesis in the catalytic domain of F(1) is coupled via a rotary mechanism of the central stalk subunits to proton translocation. Functionally, this protein is part of the stalk that links CF(0) to CF(1). It either transmits conformational changes from CF(0) to CF(1) or is implicated in proton conduction. The sequence is that of ATP synthase subunit delta from Paramagnetospirillum magneticum (strain ATCC 700264 / AMB-1) (Magnetospirillum magneticum).